The primary structure comprises 180 residues: GTP cyclohydrolase 1 (180 aa).

Zn(2+) is bound by residues Cys-71, His-74, and Cys-142.

Belongs to the GTP cyclohydrolase I family. In terms of assembly, toroid-shaped homodecamer, composed of two pentamers of five dimers.

It catalyses the reaction GTP + H2O = 7,8-dihydroneopterin 3'-triphosphate + formate + H(+). Its pathway is cofactor biosynthesis; 7,8-dihydroneopterin triphosphate biosynthesis; 7,8-dihydroneopterin triphosphate from GTP: step 1/1. This Helicobacter acinonychis (strain Sheeba) protein is GTP cyclohydrolase 1.